Consider the following 460-residue polypeptide: Muscarinic acetylcholine receptor M1 (460 aa).

Residues 1 to 22 (MNTSAPPAVSPNITVLAPGKGP) are Extracellular-facing. Asparagine 2 and asparagine 12 each carry an N-linked (GlcNAc...) asparagine glycan. A helical membrane pass occupies residues 23 to 48 (WQVAFIGITTGLLSLATVTGNLLVLI). The Cytoplasmic portion of the chain corresponds to 49 to 62 (SFKVNTELKTVNNY). A helical membrane pass occupies residues 63 to 84 (FLLSLACADLIIGTFSMNLYTT). The Extracellular segment spans residues 85-95 (YLLMGHWALGT). The helical transmembrane segment at 96–121 (LACDLWLALDYVASNASVMNLLLISF) threads the bilayer. A disulfide bridge links cysteine 98 with cysteine 178. The Cytoplasmic segment spans residues 122–142 (DRYFSVTRPLSYRAKRTPRRA). A helical transmembrane segment spans residues 143 to 164 (ALMIGLAWLVSFVLWAPAILFW). The Extracellular portion of the chain corresponds to 165-185 (QYLVGERTVLAGQCYIQFLSQ). The helical transmembrane segment at 186–209 (PIITFGTAMAAFYLPVTVMCTLYW) threads the bilayer. Over 210–366 (RIYRETESRA…LVKEKKAART (157 aa)) the chain is Cytoplasmic. 3 disordered regions span residues 225 to 256 (LQGSETPGKGGGSSSSSERSQPGAEGSPGTPP), 274 to 297 (WKEEEEEDEGSMESLTSSEGEEPG), and 310 to 351 (EAQA…QLAK). Threonine 230 carries the phosphothreonine modification. Residues 238 to 247 (SSSSERSQPG) are compositionally biased toward low complexity. Basic residues predominate over residues 328 to 343 (RPTKKGRDRAGKGQKP). The helical transmembrane segment at 367–390 (LSAILLAFILTWTPYNIMVLVSTF) threads the bilayer. Residues 391 to 397 (CKDCVPE) lie on the Extracellular side of the membrane. The chain crosses the membrane as a helical span at residues 398-420 (TLWELGYWLCYVNSTINPMCYAL). Topologically, residues 421–460 (CNKAFRDTFRLLLLCRWDKRRWRKIPKRPGSVHRTPSRQC) are cytoplasmic. The residue at position 428 (threonine 428) is a Phosphothreonine. Serine 451 bears the Phosphoserine mark. Threonine 455 is subject to Phosphothreonine. Serine 457 is modified (phosphoserine).

This sequence belongs to the G-protein coupled receptor 1 family. Muscarinic acetylcholine receptor subfamily. CHRM1 sub-subfamily. Interacts with GPRASP2. Interacts with TMEM147.

The protein resides in the cell membrane. It localises to the postsynaptic cell membrane. In terms of biological role, the muscarinic acetylcholine receptor mediates various cellular responses, including inhibition of adenylate cyclase, breakdown of phosphoinositides and modulation of potassium channels through the action of G proteins. Primary transducing effect is Pi turnover. The polypeptide is Muscarinic acetylcholine receptor M1 (CHRM1) (Pongo abelii (Sumatran orangutan)).